Consider the following 196-residue polypeptide: Large ribosomal subunit protein bL25 (196 aa).

The disordered stretch occupies residues 177-196; sequence VISIAPPKKDAEAETESAAG.

Belongs to the bacterial ribosomal protein bL25 family. CTC subfamily. In terms of assembly, part of the 50S ribosomal subunit; part of the 5S rRNA/L5/L18/L25 subcomplex. Contacts the 5S rRNA. Binds to the 5S rRNA independently of L5 and L18.

Functionally, this is one of the proteins that binds to the 5S RNA in the ribosome where it forms part of the central protuberance. In Chlorobium limicola (strain DSM 245 / NBRC 103803 / 6330), this protein is Large ribosomal subunit protein bL25.